We begin with the raw amino-acid sequence, 152 residues long: Cuticle protein 64 (152 aa).

7 consecutive repeat copies span residues 27–30, 33–37, 39–42, 86–89, 92–95, 98–101, and 127–130.

Its function is as follows. Component of the cuticle of migratory locust which contains more than 100 different structural proteins. The sequence is that of Cuticle protein 64 from Locusta migratoria (Migratory locust).